The chain runs to 246 residues: 4-hydroxy-tetrahydrodipicolinate reductase (246 aa).

Residue 7 to 12 participates in NAD(+) binding; it reads GCSGRM. Residue Arg-34 coordinates NADP(+). Residues 76-78 and 102-105 each bind NAD(+); these read ATT and CPNT. Residue His-135 is the Proton donor/acceptor of the active site. His-136 serves as a coordination point for (S)-2,3,4,5-tetrahydrodipicolinate. The active-site Proton donor is the Lys-139. 145–146 is a binding site for (S)-2,3,4,5-tetrahydrodipicolinate; sequence GT.

Belongs to the DapB family.

Its subcellular location is the cytoplasm. The enzyme catalyses (S)-2,3,4,5-tetrahydrodipicolinate + NAD(+) + H2O = (2S,4S)-4-hydroxy-2,3,4,5-tetrahydrodipicolinate + NADH + H(+). The catalysed reaction is (S)-2,3,4,5-tetrahydrodipicolinate + NADP(+) + H2O = (2S,4S)-4-hydroxy-2,3,4,5-tetrahydrodipicolinate + NADPH + H(+). It functions in the pathway amino-acid biosynthesis; L-lysine biosynthesis via DAP pathway; (S)-tetrahydrodipicolinate from L-aspartate: step 4/4. Catalyzes the conversion of 4-hydroxy-tetrahydrodipicolinate (HTPA) to tetrahydrodipicolinate. This Chlamydia caviae (strain ATCC VR-813 / DSM 19441 / 03DC25 / GPIC) (Chlamydophila caviae) protein is 4-hydroxy-tetrahydrodipicolinate reductase.